We begin with the raw amino-acid sequence, 547 residues long: Chaperonin GroEL 1 (547 aa).

ATP-binding positions include 30–33 (TLGP), K51, 87–91 (DGTTT), G415, and D496.

It belongs to the chaperonin (HSP60) family. As to quaternary structure, forms a cylinder of 14 subunits composed of two heptameric rings stacked back-to-back. Interacts with the co-chaperonin GroES.

Its subcellular location is the cytoplasm. It catalyses the reaction ATP + H2O + a folded polypeptide = ADP + phosphate + an unfolded polypeptide.. In terms of biological role, together with its co-chaperonin GroES, plays an essential role in assisting protein folding. The GroEL-GroES system forms a nano-cage that allows encapsulation of the non-native substrate proteins and provides a physical environment optimized to promote and accelerate protein folding. This chain is Chaperonin GroEL 1, found in Bradyrhizobium sp. (strain BTAi1 / ATCC BAA-1182).